Reading from the N-terminus, the 570-residue chain is Proline--tRNA ligase (570 aa).

This sequence belongs to the class-II aminoacyl-tRNA synthetase family. ProS type 1 subfamily. In terms of assembly, homodimer.

The protein resides in the cytoplasm. The enzyme catalyses tRNA(Pro) + L-proline + ATP = L-prolyl-tRNA(Pro) + AMP + diphosphate. Catalyzes the attachment of proline to tRNA(Pro) in a two-step reaction: proline is first activated by ATP to form Pro-AMP and then transferred to the acceptor end of tRNA(Pro). As ProRS can inadvertently accommodate and process non-cognate amino acids such as alanine and cysteine, to avoid such errors it has two additional distinct editing activities against alanine. One activity is designated as 'pretransfer' editing and involves the tRNA(Pro)-independent hydrolysis of activated Ala-AMP. The other activity is designated 'posttransfer' editing and involves deacylation of mischarged Ala-tRNA(Pro). The misacylated Cys-tRNA(Pro) is not edited by ProRS. The chain is Proline--tRNA ligase from Acidithiobacillus ferrooxidans (strain ATCC 23270 / DSM 14882 / CIP 104768 / NCIMB 8455) (Ferrobacillus ferrooxidans (strain ATCC 23270)).